Here is a 100-residue protein sequence, read N- to C-terminus: Large ribosomal subunit protein uL23 (100 aa).

Belongs to the universal ribosomal protein uL23 family. As to quaternary structure, part of the 50S ribosomal subunit. Contacts protein L29, and trigger factor when it is bound to the ribosome.

Its function is as follows. One of the early assembly proteins it binds 23S rRNA. One of the proteins that surrounds the polypeptide exit tunnel on the outside of the ribosome. Forms the main docking site for trigger factor binding to the ribosome. The polypeptide is Large ribosomal subunit protein uL23 (Synechococcus elongatus (strain ATCC 33912 / PCC 7942 / FACHB-805) (Anacystis nidulans R2)).